The chain runs to 173 residues: Calcium-binding protein 5 (173 aa).

4 EF-hand domains span residues 28–63, 82–99, 105–140, and 142–173; these read DEIE…MGYM, GRVD…KLLA, IGVQ…LLGE, and LTPR…MMSR. Aspartate 41, aspartate 43, aspartate 45, and aspartate 52 together coordinate Ca(2+). Ca(2+) contacts are provided by aspartate 118, asparagine 120, aspartate 122, glutamate 124, glutamate 129, aspartate 155, asparagine 157, aspartate 159, threonine 161, and glutamate 166.

As to quaternary structure, interacts with CACNA1C (via C-terminal CDB motif) in a calcium-dependent manner. Interacts with STXBP1. Interacts with MYO6. In terms of tissue distribution, retina.

The protein localises to the cytoplasm. Its function is as follows. Inhibits calcium-dependent inactivation of L-type calcium channel and shifts voltage dependence of activation to more depolarized membrane potentials. Involved in the transmission of light signals. May positively regulate neurotransmitter vesicle endocytosis and exocytosis in a salt-dependent manner. May play a role in the extension and network organization of neurites. In Homo sapiens (Human), this protein is Calcium-binding protein 5 (CABP5).